The chain runs to 380 residues: 8-amino-7-oxononanoate synthase (380 aa).

Arginine 26 serves as a coordination point for substrate. Pyridoxal 5'-phosphate is bound at residue 104-105; that stretch reads GY. Residue histidine 129 participates in substrate binding. Pyridoxal 5'-phosphate is bound by residues serine 175, 200–203, and 232–235; these read DEAH and TLSK. Residue lysine 235 is modified to N6-(pyridoxal phosphate)lysine. A substrate-binding site is contributed by threonine 345.

It belongs to the class-II pyridoxal-phosphate-dependent aminotransferase family. BioF subfamily. In terms of assembly, homodimer. Pyridoxal 5'-phosphate serves as cofactor.

It carries out the reaction 6-carboxyhexanoyl-[ACP] + L-alanine + H(+) = (8S)-8-amino-7-oxononanoate + holo-[ACP] + CO2. The protein operates within cofactor biosynthesis; biotin biosynthesis. Its function is as follows. Catalyzes the decarboxylative condensation of pimeloyl-[acyl-carrier protein] and L-alanine to produce 8-amino-7-oxononanoate (AON), [acyl-carrier protein], and carbon dioxide. This is 8-amino-7-oxononanoate synthase from Mycolicibacterium vanbaalenii (strain DSM 7251 / JCM 13017 / BCRC 16820 / KCTC 9966 / NRRL B-24157 / PYR-1) (Mycobacterium vanbaalenii).